The sequence spans 154 residues: MKLRDSLAENNSIRLQAEANTWQEAVKIGVDLLVAADVVEPRYYQAILDGVEQFGPYFVIAPGLAMPHGRPEEGVKKTGFSLVTLKKPLEFNHEDNDPVDILITMAAVDANTNQEVGIMQIVNLFEDEANFDRLRACRTAQEVLDLIDRTNAAA.

The PTS EIIA type-2 domain maps to 6 to 150 (SLAENNSIRL…QEVLDLIDRT (145 aa)). Catalysis depends on His68, which acts as the Tele-phosphohistidine intermediate. Phosphohistidine is present on His68.

It is found in the cytoplasm. The phosphoenolpyruvate-dependent sugar phosphotransferase system (sugar PTS), a major carbohydrate active transport system, catalyzes the phosphorylation of incoming sugar substrates concomitantly with their translocation across the cell membrane. The enzyme II UlaABC PTS system is involved in ascorbate transport. In Salmonella paratyphi A (strain ATCC 9150 / SARB42), this protein is Ascorbate-specific PTS system EIIA component (ulaC).